We begin with the raw amino-acid sequence, 392 residues long: F-box only protein 5-A (392 aa).

The segment at 1–21 is disordered; that stretch reads MMCGFASNQSPKKLSSKKSSA. A compositionally biased stretch (low complexity) spans 7–20; sequence SNQSPKKLSSKKSS. In terms of domain architecture, F-box spans 197–244; sequence AELFHRDFKHLLTKILRHLSAMDLINVISVSTTWRKLLQKDNWAYNAY. The segment at 319-367 adopts a ZBR-type zinc-finger fold; that stretch reads SLKVCVDCGSPAKHDPCLHRAICTRESCKLDFCTRCSCKYHFSKSCLMS. Positions 323, 326, 341, 346, 351, 354, 359, and 364 each coordinate Zn(2+).

In terms of assembly, part of a SCF (SKP1-cullin-F-box) protein ligase complex. Interacts with btrc. Interacts with skp1. Interacts with cdc20. Interacts with pin1; stabilizes fbxo5 by preventing its association with btrc in an isomerization-dependent pathway; this interaction is present during G2 phase and prevents fbxo5 degradation. Interacts with plk1. In terms of processing, proteolysed; proteolysis is induced by both cyclin B-cdk1 and cyclin A-cdk1/2 complex through probable phosphorylation. Proteolysis is inhibited by pin1 during G2.

It is found in the nucleus. The protein resides in the cytoplasm. The protein localises to the cytoskeleton. Its subcellular location is the spindle. It localises to the microtubule organizing center. It is found in the centrosome. Its pathway is protein modification; protein ubiquitination. Functionally, regulates progression through early mitosis by inhibiting the anaphase promoting complex/cyclosome (APC). Binds to the APC activator cdc20 to prevent APC activation. Can also bind directly to the APC to inhibit substrate-binding. Required to arrest unfertilized eggs at metaphase of meiosis II, by preventing their release from metaphase of meiosis II, through inhibition of APC-dependent cyclin B destruction leading to stabilization of cyclin B-cdk1 complex activity. This chain is F-box only protein 5-A (fbxo5-a), found in Xenopus laevis (African clawed frog).